A 563-amino-acid chain; its full sequence is MGNWLVNHWLSVLFLVSWLGLNIFLFVYVFLNYEKSDKYYYTREILGTALALARASALCLNFNSMVILIPVCRNLLSFLRGTCSFCNHTLRKPLDHNLTFHKLVAYMICIFTAIHIIAHLFNFERYSRSQQAMDGSLASVLSSLFHPEKEDSWLNPIQSPNVTVMYAAFTSIAGLTGVVATVALVLMVTSAMEFIRRNYFELFWYTHHLFIIYIICLGIHGLGGIVRGQTEESMSESHPRNCSYSFHEWDKYERSCRSPHFVGQPPESWKWILAPIAFYIFERILRFYRSRQKVVITKVVMHPCKVLELQMRKRGFTMGIGQYIFVNCPSISFLEWHPFTLTSAPEEEFFSIHIRAAGDWTENLIRTFEQQHSPMPRIEVDGPFGTVSEDVFQYEVAVLVGAGIGVTPFASFLKSIWYKFQRAHNKLKTQKIYFYWICRETGAFAWFNNLLNSLEQEMDELGKPDFLNYRLFLTGWDSNIAGHAALNFDRATDVLTGLKQKTSFGRPMWDNEFSRIATAHPKSVVGVFLCGPPTLAKSLRKCCRRYSSLDPRKVQFYFNKETF.

The Cytoplasmic portion of the chain corresponds to 1–8 (MGNWLVNH). Residues 9-31 (WLSVLFLVSWLGLNIFLFVYVFL) traverse the membrane as a helical segment. The Extracellular segment spans residues 32-44 (NYEKSDKYYYTRE). A helical membrane pass occupies residues 45 to 69 (ILGTALALARASALCLNFNSMVILI). Positions 54–282 (RASALCLNFN…LAPIAFYIFE (229 aa)) constitute a Ferric oxidoreductase domain. The Cytoplasmic portion of the chain corresponds to 70-102 (PVCRNLLSFLRGTCSFCNHTLRKPLDHNLTFHK). 2 residues coordinate heme: His-101 and His-115. Residues 103–123 (LVAYMICIFTAIHIIAHLFNF) traverse the membrane as a helical segment. The Extracellular portion of the chain corresponds to 124–167 (ERYSRSQQAMDGSLASVLSSLFHPEKEDSWLNPIQSPNVTVMYA). Asn-161 carries an N-linked (GlcNAc...) asparagine glycan. A helical transmembrane segment spans residues 168–188 (AFTSIAGLTGVVATVALVLMV). Residues 189–206 (TSAMEFIRRNYFELFWYT) lie on the Cytoplasmic side of the membrane. Residues 207–227 (HHLFIIYIICLGIHGLGGIVR) form a helical membrane-spanning segment. 2 residues coordinate heme: His-208 and His-220. Residues 228 to 395 (GQTEESMSES…TVSEDVFQYE (168 aa)) are Extracellular-facing. A glycan (N-linked (GlcNAc...) asparagine) is linked at Asn-241. The region spanning 283–390 (RILRFYRSRQ…DGPFGTVSED (108 aa)) is the FAD-binding FR-type domain. 337–343 (HPFTLTS) is an FAD binding site. The helical transmembrane segment at 396-416 (VAVLVGAGIGVTPFASFLKSI) threads the bilayer. Residues 396–535 (VAVLVGAGIG…GVFLCGPPTL (140 aa)) are interaction with NOXO1. The Cytoplasmic segment spans residues 417-563 (WYKFQRAHNK…VQFYFNKETF (147 aa)). Thr-429 bears the Phosphothreonine; by PKC/PRKCB mark.

In terms of assembly, NOX1, NOXA1, NOXO1, RAC1 and CYBA forms a functional multimeric complex supporting ROS production. Interacts with NOXO1. Interacts (via FAD-binding FR-type domain) with ARHGEF7 (via PH domain). The phosphorylated form at Thr-429 interacts with NOXA1 with greater affinity. The cofactor is FAD. Post-translationally, phosphorylation at Thr-429 mediated by PKC/PRKBC positively regulates its interaction with NOXA1 and enzyme activity. In terms of tissue distribution, expressed in vascular smooth muscle cells.

It is found in the cell projection. The protein localises to the invadopodium membrane. It localises to the cell membrane. It carries out the reaction NADPH + 2 O2 = 2 superoxide + NADP(+) + H(+). With respect to regulation, the oxidase activity is potentiated by NOXA1 and NOXO1. In terms of biological role, NADPH oxidase that catalyzes the generation of superoxide from molecular oxygen utilizing NADPH as an electron donor. The chain is NADPH oxidase 1 (Nox1) from Rattus norvegicus (Rat).